The chain runs to 165 residues: PTS system glucose-specific EIIA component (165 aa).

Residues Asp33 to Asn137 enclose the PTS EIIA type-1 domain. Zn(2+) is bound by residues His70 and His85. His85 (tele-phosphohistidine intermediate; for EIIA activity) is an active-site residue. His85 carries the phosphohistidine; by HPr modification.

In terms of assembly, heterodimer with glycerol kinase (glpk). It depends on Zn(2+) as a cofactor.

The protein localises to the cytoplasm. Functionally, the phosphoenolpyruvate-dependent sugar phosphotransferase system (sugar PTS), a major carbohydrate active transport system, catalyzes the phosphorylation of incoming sugar substrates concomitantly with their translocation across the cell membrane. The enzyme II complex composed of PtsG and Crr is involved in glucose transport. The sequence is that of PTS system glucose-specific EIIA component (crr) from Bacillus anthracis.